Reading from the N-terminus, the 273-residue chain is Orotidine 5'-phosphate decarboxylase (273 aa).

Lys-96 (proton donor) is an active-site residue.

This sequence belongs to the OMP decarboxylase family. Type 2 subfamily.

The catalysed reaction is orotidine 5'-phosphate + H(+) = UMP + CO2. It participates in pyrimidine metabolism; UMP biosynthesis via de novo pathway; UMP from orotate: step 2/2. In Nocardioides sp. (strain ATCC BAA-499 / JS614), this protein is Orotidine 5'-phosphate decarboxylase.